The following is a 545-amino-acid chain: Chaperonin GroEL 1 (545 aa).

Residues 30-33 (TLGP), K51, 87-91 (DGTTT), G415, and D496 each bind ATP.

The protein belongs to the chaperonin (HSP60) family. As to quaternary structure, forms a cylinder of 14 subunits composed of two heptameric rings stacked back-to-back. Interacts with the co-chaperonin GroES.

The protein resides in the cytoplasm. The enzyme catalyses ATP + H2O + a folded polypeptide = ADP + phosphate + an unfolded polypeptide.. Together with its co-chaperonin GroES, plays an essential role in assisting protein folding. The GroEL-GroES system forms a nano-cage that allows encapsulation of the non-native substrate proteins and provides a physical environment optimized to promote and accelerate protein folding. The polypeptide is Chaperonin GroEL 1 (Nitrobacter hamburgensis (strain DSM 10229 / NCIMB 13809 / X14)).